Consider the following 129-residue polypeptide: Small ribosomal subunit protein uS11 (129 aa).

Belongs to the universal ribosomal protein uS11 family. As to quaternary structure, part of the 30S ribosomal subunit. Interacts with proteins S7 and S18. Binds to IF-3.

Its function is as follows. Located on the platform of the 30S subunit, it bridges several disparate RNA helices of the 16S rRNA. Forms part of the Shine-Dalgarno cleft in the 70S ribosome. The polypeptide is Small ribosomal subunit protein uS11 (Yersinia enterocolitica serotype O:8 / biotype 1B (strain NCTC 13174 / 8081)).